The following is a 239-amino-acid chain: Derlin-2 (239 aa).

At 1–57 (MAYQSLRLEYLQIPPVSRAYTTACVLTTAAVQLELITPFQLYFNPELIFKHFQIWRL) the chain is on the cytoplasmic side. A helical membrane pass occupies residues 58 to 78 (ITNFLFFGPVGFNFLFNMIFL). At 79 to 96 (YRYCRMLEEGSFRGRTAD) the chain is on the lumenal side. A helical transmembrane segment spans residues 97 to 117 (FVFMFLFGGFLMTLFGLFVSL). Residues 118-150 (VFLGQAFTIMLVYVWSRRNPYVRMNFFGLLNFQ) are Cytoplasmic-facing. A helical transmembrane segment spans residues 151–171 (APFLPWVLMGFSLLLGNSIIV). Asp-172 is a topological domain (lumenal). The chain crosses the membrane as a helical span at residues 173-193 (LLGIAVGHIYFFLEDIFPNQP). The Cytoplasmic portion of the chain corresponds to 194 to 239 (GGIRILKTPSILRTIFDTPDEDPNYNPLPEERPGGFAWGEGQRLGG). A disordered region spans residues 214–239 (EDPNYNPLPEERPGGFAWGEGQRLGG). The segment covering 229–239 (FAWGEGQRLGG) has biased composition (gly residues).

Belongs to the derlin family. In terms of assembly, forms homo- and heterooligomers with DERL3 and, to a lesser extent, with DERL1. Interacts with the SEL1L/SYVN1 and VCP/SELENOS protein complexes. Mediates association between VCP and EDEM1, as well as that between VCP and the misfolded glycoproteins. Interacts with OS9. Interacts with SELENOK and SELENOS. Interacts with the signal recognition particle/SRP and the SRP receptor; in the process of endoplasmic reticulum stress-induced pre-emptive quality control. Interacts with CCDC47. Widely expressed, with lowest levels in brain and heart.

Its subcellular location is the endoplasmic reticulum membrane. Its function is as follows. Functional component of endoplasmic reticulum-associated degradation (ERAD) for misfolded lumenal glycoproteins, but not that of misfolded nonglycoproteins. May act by forming a channel that allows the retrotranslocation of misfolded glycoproteins into the cytosol where they are ubiquitinated and degraded by the proteasome. May mediate the interaction between VCP and misfolded glycoproteins. May also be involved in endoplasmic reticulum stress-induced pre-emptive quality control, a mechanism that selectively attenuates the translocation of newly synthesized proteins into the endoplasmic reticulum and reroutes them to the cytosol for proteasomal degradation. The polypeptide is Derlin-2 (Mus musculus (Mouse)).